Consider the following 322-residue polypeptide: Putative ankyrin repeat protein L897 (322 aa).

ANK repeat units lie at residues 88-117 (DNEY…SYDM), 181-210 (NIID…FWAN), and 248-277 (NKNE…QTDH).

The protein is Putative ankyrin repeat protein L897 of Acanthamoeba polyphaga (Amoeba).